Consider the following 436-residue polypeptide: Citrate synthase (436 aa).

Catalysis depends on residues H311 and D370.

It belongs to the citrate synthase family. In terms of assembly, homohexamer.

It carries out the reaction oxaloacetate + acetyl-CoA + H2O = citrate + CoA + H(+). It functions in the pathway carbohydrate metabolism; tricarboxylic acid cycle; isocitrate from oxaloacetate: step 1/2. With respect to regulation, allosterically inhibited by NADH. The sequence is that of Citrate synthase (gltA) from Rickettsia prowazekii (strain Madrid E).